The sequence spans 422 residues: Regulator of sigma-W protease RasP (422 aa).

Transmembrane regions (helical) follow at residues 6-26 (VIAF…GHLL), 175-195 (IAAG…MLGL), 346-366 (IVNL…VNLL), and 394-414 (EAFV…VVTW). Zn(2+) is bound at residue histidine 20. The active site involves glutamate 21. Histidine 24 serves as a coordination point for Zn(2+). The PDZ domain occupies 186-271 (AYVILVMLGL…TLHISVTPEA (86 aa)).

It belongs to the peptidase M50B family. Requires Zn(2+) as cofactor.

The protein resides in the cell membrane. Is responsible for site-2 cleavage of the RsiW anti-sigma factor. This results, after a third proteolytic step catalyzed by the ClpXP protease, in the release of SigW and the transcription activation of the genes under the control of the sigma-W factor. Can also cleave liberated signal peptides of PenP and Mpr, probably within in the cell membrane. This Bacillus subtilis (strain 168) protein is Regulator of sigma-W protease RasP.